We begin with the raw amino-acid sequence, 630 residues long: Elongation factor 4 (630 aa).

The disordered stretch occupies residues 1–22 (MTVARNRAGAGPGKGSPISSFA). A tr-type G domain is found at 30–211 (ARIRNFCIIA…EVVRQVPAPV (182 aa)). GTP-binding positions include 42–47 (DHGKST) and 158–161 (NKID).

The protein belongs to the TRAFAC class translation factor GTPase superfamily. Classic translation factor GTPase family. LepA subfamily.

Its subcellular location is the cell membrane. It catalyses the reaction GTP + H2O = GDP + phosphate + H(+). Required for accurate and efficient protein synthesis under certain stress conditions. May act as a fidelity factor of the translation reaction, by catalyzing a one-codon backward translocation of tRNAs on improperly translocated ribosomes. Back-translocation proceeds from a post-translocation (POST) complex to a pre-translocation (PRE) complex, thus giving elongation factor G a second chance to translocate the tRNAs correctly. Binds to ribosomes in a GTP-dependent manner. The polypeptide is Elongation factor 4 (Rhodococcus jostii (strain RHA1)).